Consider the following 223-residue polypeptide: Large ribosomal subunit protein uL3 (223 aa).

This sequence belongs to the universal ribosomal protein uL3 family. In terms of assembly, part of the 50S ribosomal subunit. Forms a cluster with proteins L14 and L19.

Functionally, one of the primary rRNA binding proteins, it binds directly near the 3'-end of the 23S rRNA, where it nucleates assembly of the 50S subunit. This is Large ribosomal subunit protein uL3 from Cutibacterium acnes (strain DSM 16379 / KPA171202) (Propionibacterium acnes).